Here is a 969-residue protein sequence, read N- to C-terminus: Protein translocase subunit SecA (969 aa).

Residues Gln-99, 117–121 (GEGKT), and Asp-631 contribute to the ATP site.

Belongs to the SecA family. As to quaternary structure, monomer and homodimer. Part of the essential Sec protein translocation apparatus which comprises SecA, SecYEG and auxiliary proteins SecDF. Other proteins may also be involved.

It is found in the cell inner membrane. Its subcellular location is the cytoplasm. It catalyses the reaction ATP + H2O + cellular proteinSide 1 = ADP + phosphate + cellular proteinSide 2.. Its function is as follows. Part of the Sec protein translocase complex. Interacts with the SecYEG preprotein conducting channel. Has a central role in coupling the hydrolysis of ATP to the transfer of proteins into and across the cell membrane, serving as an ATP-driven molecular motor driving the stepwise translocation of polypeptide chains across the membrane. The protein is Protein translocase subunit SecA of Chlamydia trachomatis serovar L2 (strain ATCC VR-902B / DSM 19102 / 434/Bu).